The primary structure comprises 84 residues: Small ribosomal subunit protein bS16 (84 aa).

The protein belongs to the bacterial ribosomal protein bS16 family.

This chain is Small ribosomal subunit protein bS16, found in Desulforapulum autotrophicum (strain ATCC 43914 / DSM 3382 / VKM B-1955 / HRM2) (Desulfobacterium autotrophicum).